A 192-amino-acid chain; its full sequence is Peptidyl-prolyl cis-trans isomerase 1 (192 aa).

The PPIase cyclophilin-type domain maps to 25-188; that stretch reads FFDVSIGEEP…KTVTIADCGE (164 aa).

It belongs to the cyclophilin-type PPIase family.

The enzyme catalyses [protein]-peptidylproline (omega=180) = [protein]-peptidylproline (omega=0). In terms of biological role, PPIases accelerate the folding of proteins. It catalyzes the cis-trans isomerization of proline imidic peptide bonds in oligopeptides. This Caenorhabditis elegans protein is Peptidyl-prolyl cis-trans isomerase 1 (cyn-1).